Consider the following 384-residue polypeptide: Cytochrome b (384 aa).

4 helical membrane passes run 32 to 52 (FGSL…FLSM), 75 to 96 (FLLR…YFHI), 111 to 131 (WRVG…GYVL), and 176 to 196 (FFSL…VHLI). Heme b contacts are provided by histidine 81 and histidine 95. Positions 180 and 194 each coordinate heme b. Residue histidine 199 coordinates a ubiquinone. 4 consecutive transmembrane segments (helical) span residues 224–244 (SKDW…VYLM), 286–306 (FGGV…PLLH), 318–338 (FGRM…WIGS), and 345–366 (FIII…LIPL).

Belongs to the cytochrome b family. As to quaternary structure, the main subunits of complex b-c1 are: cytochrome b, cytochrome c1 and the Rieske protein. Heme b is required as a cofactor.

Its subcellular location is the mitochondrion inner membrane. Its function is as follows. Component of the ubiquinol-cytochrome c reductase complex (complex III or cytochrome b-c1 complex) that is part of the mitochondrial respiratory chain. The b-c1 complex mediates electron transfer from ubiquinol to cytochrome c. Contributes to the generation of a proton gradient across the mitochondrial membrane that is then used for ATP synthesis. The polypeptide is Cytochrome b (MT-CYB) (Acropora tenuis (Purple tipped acropora)).